We begin with the raw amino-acid sequence, 117 residues long: Calcitonin receptor-stimulating peptide 2 (117 aa).

Residues 1–25 (MGFWKFPPFLVLSILVLYQAGMFHT) form the signal peptide. Positions 26–79 (APVRLPLESSFDSATLTEEEVSLLLVAMVKDYVQMKATVLEQESEDFSITAQEK) are excised as a propeptide. An intrachain disulfide couples Cys-81 to Cys-86.

This sequence belongs to the calcitonin family. As to expression, mainly expressed in the thyroid gland and CNS. Found in the nerve cells of the cerebrum, hippocampus, hypothalamus, pons/midbrain and thalamus. Also detected in the glia-like cells of pons/midbrain and in meninx of tactus opticus.

Its subcellular location is the secreted. In Sus scrofa (Pig), this protein is Calcitonin receptor-stimulating peptide 2 (CRSP2).